Here is a 382-residue protein sequence, read N- to C-terminus: Ustilagic acid biosynthesis cluster protein orf2 (382 aa).

The segment covering methionine 1–proline 20 has biased composition (polar residues). The interval methionine 1–tyrosine 22 is disordered.

It functions in the pathway secondary metabolite biosynthesis. In terms of biological role, part of the gene cluster that mediates the biosynthesis of the glycolipid biosurfactant ustilagic acid (UA). UA is a secreted cellobiose glycolipid that is toxic for many microorganisms and confers biocontrol activity to U.maydis. UA consists of 15,16-dihydroxypalmitic or 2,15,16-trihydroxypalmitic acid, which is O-glycosidically linked to cellobiose at its terminal hydroxyl group. In addition, the cellobiose moiety is acetylated and acylated with a short-chain hydroxy fatty acid. UA biosynthesis starts with omega-hydroxylation of palmitic acid catalyzed by the cytochrome P450 monooxygenase cyp1. Terminal hydroxylation of palmitic acid precedes subterminal hydroxylation catalyzed by the cytochrome P450 monooxygenase cyp2. Sequential glucosylation of the hydroxy fatty acid is probably catalyzed by the glycosyltransferase ugt1. The cellobiose lipid is further decorated by acetylation of the proximal glucose residue and by acylation with a short-chain beta-hydroxy fatty acid at the distal glucose residue. The acyltransferase uat1 may be a good candidate for catalyzing either acetylation or acylation of the cellobiose lipid. The fatty acid synthase fas2 may be involved in synthesis of the carbon backbone of the short-chain beta-hydroxy fatty acid esterified to the cellobiose disaccharide. The secreted UA consists of a mixture of both alpha-hydroxylated and non-hydroxylated glycolipids; therefore, alpha-hydroxylation of the long-chain fatty, catalyzed by the fatty acid hydroxylase ahd1, occurs late in UA biosynthesis and may be the last step before secretion. This is Ustilagic acid biosynthesis cluster protein orf2 from Mycosarcoma maydis (Corn smut fungus).